Reading from the N-terminus, the 197-residue chain is Putative protein N5-glutamine methyltransferase MJ0928 (197 aa).

Residues 42 to 46 (GVGTG), aspartate 64, and asparagine 105 each bind S-adenosyl-L-methionine. 105 to 108 (NPPY) provides a ligand contact to substrate.

This sequence belongs to the eukaryotic/archaeal PrmC-related family.

The enzyme catalyses L-glutaminyl-[protein] + S-adenosyl-L-methionine = N(5)-methyl-L-glutaminyl-[protein] + S-adenosyl-L-homocysteine + H(+). Functionally, putative protein methyltransferase using S-adenosyl-L-methionine as the methyl donor. May methylate a Gln residue in target proteins. This is Putative protein N5-glutamine methyltransferase MJ0928 from Methanocaldococcus jannaschii (strain ATCC 43067 / DSM 2661 / JAL-1 / JCM 10045 / NBRC 100440) (Methanococcus jannaschii).